A 274-amino-acid polypeptide reads, in one-letter code: 5'-nucleotidase SurE (274 aa).

Positions 12, 13, 45, and 103 each coordinate a divalent metal cation.

The protein belongs to the SurE nucleotidase family. A divalent metal cation is required as a cofactor.

It is found in the cytoplasm. It carries out the reaction a ribonucleoside 5'-phosphate + H2O = a ribonucleoside + phosphate. Its function is as follows. Nucleotidase that shows phosphatase activity on nucleoside 5'-monophosphates. The chain is 5'-nucleotidase SurE from Chlamydia felis (strain Fe/C-56) (Chlamydophila felis).